The following is a 68-amino-acid chain: Large ribosomal subunit protein bL35 (68 aa).

Belongs to the bacterial ribosomal protein bL35 family.

This is Large ribosomal subunit protein bL35 from Persephonella marina (strain DSM 14350 / EX-H1).